Consider the following 394-residue polypeptide: Enoyl-CoA delta isomerase 2 (394 aa).

The transit peptide at Met-1 to Ala-38 directs the protein to the mitochondrion. The region spanning Ser-39–Ser-124 is the ACB domain. Lys-51 carries the N6-acetyllysine; alternate modification. Lys-51 carries the post-translational modification N6-succinyllysine; alternate. An N6-succinyllysine modification is found at Lys-55. Position 62 is an N6-acetyllysine; alternate (Lys-62). Residue Lys-62 is modified to N6-succinyllysine; alternate. Tyr-66 to Lys-70 contacts an acyl-CoA. N6-succinyllysine is present on residues Lys-70, Lys-81, and Lys-90. The residue at position 92 (Lys-92) is an N6-acetyllysine; alternate. Position 92 is an N6-succinyllysine; alternate (Lys-92). Lys-92 provides a ligand contact to an acyl-CoA. Position 101 is a phosphoserine (Ser-101). Tyr-111 contributes to the an acyl-CoA binding site. Residue Ser-119 is modified to Phosphoserine. Residues Thr-151 to Pro-322 are ECH-like. N6-succinyllysine is present on Lys-161. Ser-198–Leu-202 provides a ligand contact to substrate. An N6-succinyllysine modification is found at Lys-289. The short motif at Ser-392–Leu-394 is the Microbody targeting signal element.

This sequence in the C-terminal section; belongs to the enoyl-CoA hydratase/isomerase family. In terms of tissue distribution, abundant in heart, skeletal muscle and liver. Expressed in CD34(+) T-cells and CD34(+) bone marrow cells.

It localises to the mitochondrion. The protein resides in the peroxisome matrix. It carries out the reaction a (3Z)-enoyl-CoA = a 4-saturated (2E)-enoyl-CoA. It catalyses the reaction (3Z)-octenoyl-CoA = (2E)-octenoyl-CoA. The catalysed reaction is a (3E)-enoyl-CoA = a 4-saturated (2E)-enoyl-CoA. The enzyme catalyses (2E)-tetradecenoyl-CoA = (3Z)-tetradecenoyl-CoA. It carries out the reaction (3E)-tetradecenoyl-CoA = (2E)-tetradecenoyl-CoA. It catalyses the reaction (3E)-octenoyl-CoA = (2E)-octenoyl-CoA. The catalysed reaction is (3E)-nonenoyl-CoA = (2E)-nonenoyl-CoA. Its pathway is lipid metabolism; fatty acid beta-oxidation. Its function is as follows. Able to isomerize both 3-cis and 3-trans double bonds into the 2-trans form in a range of enoyl-CoA species. Has a preference for 3-trans substrates. This is Enoyl-CoA delta isomerase 2 (ECI2) from Homo sapiens (Human).